A 150-amino-acid polypeptide reads, in one-letter code: Cell division protein SepF (150 aa).

The disordered stretch occupies residues 26-45; sequence DREEIPEEHESKDRTAYQSK.

This sequence belongs to the SepF family. In terms of assembly, homodimer. Interacts with FtsZ.

It is found in the cytoplasm. In terms of biological role, cell division protein that is part of the divisome complex and is recruited early to the Z-ring. Probably stimulates Z-ring formation, perhaps through the cross-linking of FtsZ protofilaments. Its function overlaps with FtsA. This is Cell division protein SepF from Bacillus licheniformis (strain ATCC 14580 / DSM 13 / JCM 2505 / CCUG 7422 / NBRC 12200 / NCIMB 9375 / NCTC 10341 / NRRL NRS-1264 / Gibson 46).